A 402-amino-acid chain; its full sequence is Methylthioribose-1-phosphate isomerase (402 aa).

Aspartate 275 (proton donor) is an active-site residue.

It belongs to the eIF-2B alpha/beta/delta subunits family. MtnA subfamily.

It localises to the cytoplasm. It is found in the nucleus. It carries out the reaction 5-(methylsulfanyl)-alpha-D-ribose 1-phosphate = 5-(methylsulfanyl)-D-ribulose 1-phosphate. The protein operates within amino-acid biosynthesis; L-methionine biosynthesis via salvage pathway; L-methionine from S-methyl-5-thio-alpha-D-ribose 1-phosphate: step 1/6. Catalyzes the interconversion of methylthioribose-1-phosphate (MTR-1-P) into methylthioribulose-1-phosphate (MTRu-1-P). This Clavispora lusitaniae (strain ATCC 42720) (Yeast) protein is Methylthioribose-1-phosphate isomerase.